Reading from the N-terminus, the 70-residue chain is Uteroglobin (70 aa).

Belongs to the secretoglobin family. In terms of assembly, antiparallel homodimer; disulfide-linked. Interaction with LMBR1L is controversial. Club cells (nonciliated cells of the surface epithelium of the pulmonary airways).

It is found in the secreted. Binds phosphatidylcholine, phosphatidylinositol, polychlorinated biphenyls (PCB) and weakly progesterone, potent inhibitor of phospholipase A2. The protein is Uteroglobin (SCGB1A1) of Macaca fuscata fuscata (Japanese macaque).